A 418-amino-acid polypeptide reads, in one-letter code: Tyrosine--tRNA ligase 1 (418 aa).

Tyr34 provides a ligand contact to L-tyrosine. Residues 39 to 48 carry the 'HIGH' region motif; sequence PTADSLHIGH. L-tyrosine is bound by residues Tyr169 and Gln173. The short motif at 230 to 234 is the 'KMSKS' region element; sequence KFGKT. An ATP-binding site is contributed by Lys233. The 67-residue stretch at 352-418 folds into the S4 RNA-binding domain; that stretch reads TVLIDLLVES…GKKKYFLIRY (67 aa).

Belongs to the class-I aminoacyl-tRNA synthetase family. TyrS type 1 subfamily. As to quaternary structure, homodimer.

Its subcellular location is the cytoplasm. It catalyses the reaction tRNA(Tyr) + L-tyrosine + ATP = L-tyrosyl-tRNA(Tyr) + AMP + diphosphate + H(+). Catalyzes the attachment of tyrosine to tRNA(Tyr) in a two-step reaction: tyrosine is first activated by ATP to form Tyr-AMP and then transferred to the acceptor end of tRNA(Tyr). This Bacillus cereus (strain ATCC 10987 / NRS 248) protein is Tyrosine--tRNA ligase 1.